A 292-amino-acid chain; its full sequence is 33 kDa chaperonin (292 aa).

2 disulfide bridges follow: Cys-230/Cys-232 and Cys-263/Cys-266.

This sequence belongs to the HSP33 family. Post-translationally, under oxidizing conditions two disulfide bonds are formed involving the reactive cysteines. Under reducing conditions zinc is bound to the reactive cysteines and the protein is inactive.

It localises to the cytoplasm. In terms of biological role, redox regulated molecular chaperone. Protects both thermally unfolding and oxidatively damaged proteins from irreversible aggregation. Plays an important role in the bacterial defense system toward oxidative stress. This chain is 33 kDa chaperonin, found in Serratia proteamaculans (strain 568).